The chain runs to 430 residues: Tyrosine--tRNA ligase (430 aa).

L-tyrosine is bound at residue Y32. A 'HIGH' region motif is present at residues 37–46 (PTADSLHIGH). L-tyrosine contacts are provided by Y172 and Q176. Positions 232 to 236 (KFGKT) match the 'KMSKS' region motif. Residue K235 coordinates ATP. An S4 RNA-binding domain is found at 362 to 430 (ISLVDLLADA…KKSYYLIIVE (69 aa)).

Belongs to the class-I aminoacyl-tRNA synthetase family. TyrS type 1 subfamily. As to quaternary structure, homodimer.

The protein resides in the cytoplasm. The catalysed reaction is tRNA(Tyr) + L-tyrosine + ATP = L-tyrosyl-tRNA(Tyr) + AMP + diphosphate + H(+). In terms of biological role, catalyzes the attachment of tyrosine to tRNA(Tyr) in a two-step reaction: tyrosine is first activated by ATP to form Tyr-AMP and then transferred to the acceptor end of tRNA(Tyr). This Porphyromonas gingivalis (strain ATCC BAA-308 / W83) protein is Tyrosine--tRNA ligase.